Consider the following 461-residue polypeptide: tRNA-2-methylthio-N(6)-dimethylallyladenosine synthase (461 aa).

Positions 18–134 constitute an MTTase N-terminal domain; that stretch reads KHIYIQTLGC…LPDFISRIEK (117 aa). [4Fe-4S] cluster is bound by residues cysteine 27, cysteine 63, cysteine 97, cysteine 172, cysteine 176, and cysteine 179. Positions 158 to 388 constitute a Radical SAM core domain; sequence CNGQVSSFVT…QALQEQHTLE (231 aa). The 64-residue stretch at 391–454 folds into the TRAM domain; the sequence is KAMEGKQEDV…LHSLRGEMLC (64 aa).

The protein belongs to the methylthiotransferase family. MiaB subfamily. Monomer. [4Fe-4S] cluster serves as cofactor.

The protein localises to the cytoplasm. The catalysed reaction is N(6)-dimethylallyladenosine(37) in tRNA + (sulfur carrier)-SH + AH2 + 2 S-adenosyl-L-methionine = 2-methylsulfanyl-N(6)-dimethylallyladenosine(37) in tRNA + (sulfur carrier)-H + 5'-deoxyadenosine + L-methionine + A + S-adenosyl-L-homocysteine + 2 H(+). Catalyzes the methylthiolation of N6-(dimethylallyl)adenosine (i(6)A), leading to the formation of 2-methylthio-N6-(dimethylallyl)adenosine (ms(2)i(6)A) at position 37 in tRNAs that read codons beginning with uridine. This Syntrophus aciditrophicus (strain SB) protein is tRNA-2-methylthio-N(6)-dimethylallyladenosine synthase.